The primary structure comprises 368 residues: Ferrochelatase (368 aa).

The Fe cation site is built by His-209 and Glu-290. Residues 341–368 are disordered; that stretch reads ADLGGGREATGQAAERSRQRALALGAKQ.

The protein belongs to the ferrochelatase family.

The protein resides in the cytoplasm. It catalyses the reaction heme b + 2 H(+) = protoporphyrin IX + Fe(2+). It participates in porphyrin-containing compound metabolism; protoheme biosynthesis; protoheme from protoporphyrin-IX: step 1/1. In terms of biological role, catalyzes the ferrous insertion into protoporphyrin IX. The protein is Ferrochelatase of Nitrosococcus oceani (strain ATCC 19707 / BCRC 17464 / JCM 30415 / NCIMB 11848 / C-107).